Consider the following 691-residue polypeptide: Elongation factor G (691 aa).

The 275-residue stretch at 8-282 (DRVRNIGIAA…AVVDYLPAPI (275 aa)) folds into the tr-type G domain. GTP-binding positions include 17-24 (AHIDAGKT), 81-85 (DTPGH), and 135-138 (NKMD).

It belongs to the TRAFAC class translation factor GTPase superfamily. Classic translation factor GTPase family. EF-G/EF-2 subfamily.

The protein localises to the cytoplasm. In terms of biological role, catalyzes the GTP-dependent ribosomal translocation step during translation elongation. During this step, the ribosome changes from the pre-translocational (PRE) to the post-translocational (POST) state as the newly formed A-site-bound peptidyl-tRNA and P-site-bound deacylated tRNA move to the P and E sites, respectively. Catalyzes the coordinated movement of the two tRNA molecules, the mRNA and conformational changes in the ribosome. This chain is Elongation factor G, found in Synechococcus sp. (strain RCC307).